A 395-amino-acid chain; its full sequence is Inner membrane protein YjgN (395 aa).

Residues 1–24 lie on the Cytoplasmic side of the membrane; the sequence is MNNVISSKDNHNHTLVFTGKGGKY. A helical transmembrane segment spans residues 25–45; it reads FVICLVNFLLTCITLGIYAPW. Residues 46–71 are Periplasmic-facing; that stretch reads AMVKCRRYIYTNMTLNNQPFAYKATG. Residues 72 to 92 traverse the membrane as a helical segment; the sequence is GALFISVLLVFIIYIVSLSLI. Over 93–95 the chain is Cytoplasmic; sequence EHG. Residues 96–116 form a helical membrane-spanning segment; sequence HPGLGFTLFGLLIAIIPFMAV. The Periplasmic portion of the chain corresponds to 117 to 146; that stretch reads KGLQYQAMMTSLNGVHFGFQCSMRRAWWYM. Residues 147–167 form a helical membrane-spanning segment; the sequence is FALPVLLMVALYIVLYIISLV. Residue T168 is a topological domain, cytoplasmic. Residues 169–189 form a helical membrane-spanning segment; that stretch reads IAVGGLVFSIVFLGLLAIIGI. The Periplasmic segment spans residues 190–229; it reads GVINGITYSKWMTLFGNGANFGIHRFSIQVNVKTCIRGCV. A helical transmembrane segment spans residues 230–250; sequence LAMLTLFPFAVVIGYLIAPVF. Topologically, residues 251 to 275 are cytoplasmic; it reads TDMILLSMMGNAQAGGALILQYYGQ. A helical membrane pass occupies residues 276 to 296; that stretch reads IMACYFLYFLAIIVVTSYLYV. Residues 297-327 lie on the Periplasmic side of the membrane; sequence ALRNLFLNNLSLANDSIRFHSSVTAHGMLWR. The chain crosses the membrane as a helical span at residues 328–348; sequence LLVVFVISGVTLGLAYPWLKI. The Cytoplasmic portion of the chain corresponds to 349 to 395; that stretch reads WLVSWLAQNTQVQGDLDSLELTNDEKPLENSPLMWISRGIMPYFPFI.

The protein localises to the cell inner membrane. This Salmonella typhimurium (strain LT2 / SGSC1412 / ATCC 700720) protein is Inner membrane protein YjgN (yjgN).